The sequence spans 93 residues: Pyrimidine/purine nucleoside phosphorylase (93 aa).

The protein belongs to the nucleoside phosphorylase PpnP family.

It catalyses the reaction a purine D-ribonucleoside + phosphate = a purine nucleobase + alpha-D-ribose 1-phosphate. It carries out the reaction adenosine + phosphate = alpha-D-ribose 1-phosphate + adenine. The enzyme catalyses cytidine + phosphate = cytosine + alpha-D-ribose 1-phosphate. The catalysed reaction is guanosine + phosphate = alpha-D-ribose 1-phosphate + guanine. It catalyses the reaction inosine + phosphate = alpha-D-ribose 1-phosphate + hypoxanthine. It carries out the reaction thymidine + phosphate = 2-deoxy-alpha-D-ribose 1-phosphate + thymine. The enzyme catalyses uridine + phosphate = alpha-D-ribose 1-phosphate + uracil. The catalysed reaction is xanthosine + phosphate = alpha-D-ribose 1-phosphate + xanthine. In terms of biological role, catalyzes the phosphorolysis of diverse nucleosides, yielding D-ribose 1-phosphate and the respective free bases. Can use uridine, adenosine, guanosine, cytidine, thymidine, inosine and xanthosine as substrates. Also catalyzes the reverse reactions. The chain is Pyrimidine/purine nucleoside phosphorylase from Pseudomonas paraeruginosa (strain DSM 24068 / PA7) (Pseudomonas aeruginosa (strain PA7)).